Here is a 545-residue protein sequence, read N- to C-terminus: Carboxypeptidase N subunit 2 (545 aa).

The first 21 residues, 1 to 21 (MLPGAWLLWTSLLLLARPAQP), serve as a signal peptide directing secretion. The 28-residue stretch at 22–49 (CPMGCDCFVQEVFCSDEELATVPLDIPP) folds into the LRRNT domain. N-linked (GlcNAc...) asparagine glycosylation is found at Asn-74, Asn-111, and Asn-119. LRR repeat units lie at residues 98-119 (RLED…IFSN), 122-143 (SLGK…LFQH), 146-167 (ALES…LFQP), 170-191 (HLKT…LFHP), 194-215 (SLQT…VFGK), 218-239 (SLQE…VFSQ), 242-263 (CLER…IFAS), 266-287 (NLTF…LFAH), 290-311 (CLVG…TFAH), 314-335 (NLRS…IFRD), 338-359 (ELVK…LFQN), and 362-383 (KLEL…IFDT). Asn-228 is a glycosylation site (N-linked (GlcNAc...) asparagine). Asn-266 carries N-linked (GlcNAc...) asparagine glycosylation. Residues Asn-348 and Asn-359 are each glycosylated (N-linked (GlcNAc...) asparagine). One can recognise an LRRCT domain in the interval 395-447 (NPWQCDCHLAYLFNWLQQYTDRLLNIQTYCAGPAYLKGQVVPALNEKQLVCPV). N-linked (GlcNAc...) asparagine glycosylation occurs at Asn-518.

As to quaternary structure, tetramer of two catalytic chains and two glycosylated inactive chains. Whether or not any Cys residues participate in intrachain bonds is unknown, but they do not form interchain disulfide bonds with the 50 kDa catalytic subunit.

It localises to the secreted. Its function is as follows. The 83 kDa subunit binds and stabilizes the catalytic subunit at 37 degrees Celsius and keeps it in circulation. Under some circumstances it may be an allosteric modifier of the catalytic subunit. This chain is Carboxypeptidase N subunit 2 (CPN2), found in Homo sapiens (Human).